The sequence spans 114 residues: Period circadian protein (114 aa).

The disordered stretch occupies residues 23–114 (VTNTSIAGTG…VTLTESLLNK (92 aa)). 14 repeat units span residues 30 to 31 (GT), 33 to 34 (GT), 36 to 37 (GT), 38 to 39 (GT), 40 to 41 (GT), 42 to 43 (GT), 44 to 45 (GT), 46 to 47 (GT), 48 to 49 (GT), 50 to 51 (GT), 52 to 53 (GT), 54 to 55 (GT), 56 to 57 (GT), and 58 to 59 (GT). Residues 30–79 (GTGGTGGTGTGTGTGTGTGTGTGTGTGTGTDTGTGTGTGTETGTGTGTGT) show a composition bias toward gly residues. Residues 30-87 (GTGGTGGTGTGTGTGTGTGTGTGTGTGTGTDTGTGTGTGTETGTGTGTGTRNGTNSGT) are 28 X 2 AA approximate tandem repeats of G-[TN]. One copy of the 15; approximate repeat lies at 60–61 (DT). 4 consecutive repeat copies span residues 62 to 63 (GT), 64 to 65 (GT), 66 to 67 (GT), and 68 to 69 (GT). Residues 70–71 (ET) form a 20; approximate repeat. A run of 4 repeats spans residues 72-73 (GT), 74-75 (GT), 76-77 (GT), and 78-79 (GT). The 25; approximate repeat unit spans residues 80-81 (RN). The span at 80–91 (RNGTNSGTKTGT) shows a compositional bias: low complexity. Repeat unit 26 spans residues 82–83 (GT). One copy of the 27; approximate repeat lies at 84 to 85 (NS). Repeat 28 spans residues 86–87 (GT). The segment covering 105-114 (VTLTESLLNK) has biased composition (polar residues).

In terms of assembly, forms a heterodimer with timeless (TIM); the complex then translocates into the nucleus. Phosphorylated with a circadian rhythmicity, probably by the double-time protein (dbt). Phosphorylation could be implicated in the stability of per monomer and in the formation of heterodimer per-tim.

It localises to the nucleus. The protein localises to the cytoplasm. Its subcellular location is the perinuclear region. Functionally, essential for biological clock functions. Determines the period length of circadian and ultradian rhythms; an increase in PER dosage leads to shortened circadian rhythms and a decrease leads to lengthened circadian rhythms. Essential for the circadian rhythmicity of locomotor activity, eclosion behavior, and for the rhythmic component of the male courtship song that originates in the thoracic nervous system. The biological cycle depends on the rhythmic formation and nuclear localization of the TIM-PER complex. Light induces the degradation of TIM, which promotes elimination of PER. Nuclear activity of the heterodimer coordinatively regulates PER and TIM transcription through a negative feedback loop. Behaves as a negative element in circadian transcriptional loop. Does not appear to bind DNA, suggesting indirect transcriptional inhibition. This is Period circadian protein (per) from Drosophila orena (Fruit fly).